Here is a 459-residue protein sequence, read N- to C-terminus: Argininosuccinate lyase (459 aa).

The protein belongs to the lyase 1 family. Argininosuccinate lyase subfamily.

The protein resides in the cytoplasm. The catalysed reaction is 2-(N(omega)-L-arginino)succinate = fumarate + L-arginine. Its pathway is amino-acid biosynthesis; L-arginine biosynthesis; L-arginine from L-ornithine and carbamoyl phosphate: step 3/3. The protein is Argininosuccinate lyase of Staphylococcus aureus (strain MSSA476).